The chain runs to 147 residues: Large ribosomal subunit protein uL15 (147 aa).

Basic and acidic residues predominate over residues 1-13; sequence MRLHDLKPAEGAR. Residues 1 to 58 form a disordered region; that stretch reads MRLHDLKPAEGARRERKRVGRGIGSGHGKTSGRGQKGQKARSGGGVRPGFEGGQMPLT. Composition is skewed to gly residues over residues 21–35 and 42–52; these read RGIGSGHGKTSGRGQ and SGGGVRPGFEG.

It belongs to the universal ribosomal protein uL15 family. In terms of assembly, part of the 50S ribosomal subunit.

Its function is as follows. Binds to the 23S rRNA. The chain is Large ribosomal subunit protein uL15 from Thermoanaerobacter sp. (strain X514).